The following is a 401-amino-acid chain: Dihydrolipoyllysine-residue succinyltransferase component of 2-oxoglutarate dehydrogenase complex (401 aa).

Residues 2–77 enclose the Lipoyl-binding domain; sequence SVKIIVPSLG…AVGEEIGEIN (76 aa). Lys-43 bears the N6-lipoyllysine mark. The 38-residue stretch at 115 to 152 folds into the Peripheral subunit-binding (PSBD) domain; that stretch reads ILAPSVQKLVTENKLDPNNIKGTGRDGRITKGDVLETI. Catalysis depends on residues His-372 and Asp-376.

This sequence belongs to the 2-oxoacid dehydrogenase family. Forms a 24-polypeptide structural core with octahedral symmetry. Part of the 2-oxoglutarate dehydrogenase (OGDH) complex composed of E1 (2-oxoglutarate dehydrogenase), E2 (dihydrolipoamide succinyltransferase) and E3 (dihydrolipoamide dehydrogenase); the complex contains multiple copies of the three enzymatic components (E1, E2 and E3). (R)-lipoate serves as cofactor.

It catalyses the reaction N(6)-[(R)-dihydrolipoyl]-L-lysyl-[protein] + succinyl-CoA = N(6)-[(R)-S(8)-succinyldihydrolipoyl]-L-lysyl-[protein] + CoA. It participates in amino-acid degradation; L-lysine degradation via saccharopine pathway; glutaryl-CoA from L-lysine: step 6/6. Its function is as follows. E2 component of the 2-oxoglutarate dehydrogenase (OGDH) complex which catalyzes the second step in the conversion of 2-oxoglutarate to succinyl-CoA and CO(2). The polypeptide is Dihydrolipoyllysine-residue succinyltransferase component of 2-oxoglutarate dehydrogenase complex (sucB) (Rickettsia felis (strain ATCC VR-1525 / URRWXCal2) (Rickettsia azadi)).